The sequence spans 508 residues: Phosphoglycerate kinase A (508 aa).

Residues valine 32, aspartate 33, phenylalanine 34, asparagine 35, arginine 48, serine 70, histidine 71, glycine 73, arginine 74, arginine 224, histidine 260, and arginine 261 each contribute to the (2R)-3-phosphoglycerate site. Residues glycine 306 and alanine 307 each coordinate ADP. A CDP-binding site is contributed by glycine 306. AMP contacts are provided by alanine 307 and lysine 308. Alanine 307 provides a ligand contact to ATP. Alanine 307 lines the Mg(2+) pocket. A (2R)-3-phosphoglycerate-binding site is contributed by lysine 308. Glutamate 311 contributes to the CDP binding site. Glutamate 311 provides a ligand contact to Mg(2+). Residues lysine 312 and glycine 330 each contribute to the ADP site. Lysine 312 lines the AMP pocket. ATP is bound at residue lysine 312. CDP is bound at residue glycine 330. Alanine 331 and alanine 403 together coordinate AMP. ATP-binding residues include alanine 331 and alanine 403. ADP contacts are provided by alanine 403 and asparagine 427. CDP-binding residues include glycine 428 and phenylalanine 433. Phenylalanine 433, glutamate 434, glutamate 466, and serine 467 together coordinate ADP. Glutamate 434 serves as a coordination point for AMP. ATP contacts are provided by glutamate 434, glutamate 466, and serine 467. Glutamate 466 serves as a coordination point for Mg(2+).

This sequence belongs to the phosphoglycerate kinase family. Monomer. Mg(2+) serves as cofactor.

The enzyme catalyses (2R)-3-phosphoglycerate + ATP = (2R)-3-phospho-glyceroyl phosphate + ADP. Its pathway is carbohydrate degradation; glycolysis; pyruvate from D-glyceraldehyde 3-phosphate: step 2/5. The polypeptide is Phosphoglycerate kinase A (Trypanosoma brucei brucei).